We begin with the raw amino-acid sequence, 765 residues long: Protein transport protein sec23-2 (765 aa).

Zn(2+)-binding residues include cysteine 56, cysteine 60, cysteine 79, and cysteine 82. 2 positions are modified to phosphoserine: serine 565 and serine 566.

The protein belongs to the SEC23/SEC24 family. SEC23 subfamily. In terms of assembly, the COPII coat is composed of at least 5 proteins: the sec23/24 complex, the sec13/31 complex, and the protein sar1.

It is found in the cytoplasm. It localises to the cytoplasmic vesicle. The protein resides in the COPII-coated vesicle membrane. The protein localises to the endoplasmic reticulum membrane. Its subcellular location is the golgi apparatus membrane. Component of the coat protein complex II (COPII) which promotes the formation of transport vesicles from the endoplasmic reticulum (ER). The coat has two main functions, the physical deformation of the endoplasmic reticulum membrane into vesicles and the selection of cargo molecules. The sequence is that of Protein transport protein sec23-2 (sec232) from Schizosaccharomyces pombe (strain 972 / ATCC 24843) (Fission yeast).